We begin with the raw amino-acid sequence, 443 residues long: Serine/threonine-protein kinase Nek2 (443 aa).

The 264-residue stretch at 8-271 folds into the Protein kinase domain; it reads YEVLHSIGTG…VEEILESPLI (264 aa). ATP contacts are provided by residues 14-22 and Lys-37; that span reads IGTGSYGRC. The Proton acceptor role is filled by Asp-141. Position 170 is a phosphothreonine; by autocatalysis (Thr-170). Position 171 is a phosphoserine; by autocatalysis (Ser-171). A phosphothreonine; by autocatalysis mark is found at Thr-175 and Thr-179. At Ser-184 the chain carries Phosphoserine. Ser-241 is modified (phosphoserine; by autocatalysis). The interaction with PCNT stretch occupies residues 264 to 443; the sequence is EILESPLIAD…LKSRQILGMR (180 aa). Positions 282-292 are enriched in basic and acidic residues; the sequence is NLERRGRRSGE. The segment at 282-303 is disordered; that stretch reads NLERRGRRSGEPSKLPDSSPVL. Ser-300 is modified (phosphoserine). The tract at residues 301–443 is interaction with CEP85; the sequence is PVLSELKLKE…LKSRQILGMR (143 aa). Residues 303-361 adopt a coiled-coil conformation; sequence LSELKLKERQLQDREQALRAREDILEQKERELCIRERLAEDKLARAESLMKNYSLLKEH. The segment at 306-334 is leucine-zipper; that stretch reads LKLKERQLQDREQALRAREDILEQKEREL. The tract at residues 329-443 is necessary for interaction with MAD1L1; the sequence is QKERELCIRE…LKSRQILGMR (115 aa). A required for microtubule binding and for localization to the centrosomes region spans residues 333-370; the sequence is ELCIRERLAEDKLARAESLMKNYSLLKEHRLLCLAGGP. Ser-356 is modified (phosphoserine; by STK3/MST2). The segment at 383 to 402 is disordered; it reads VHFHGESKENTARSENSESY. Positions 385 to 398 are enriched in basic and acidic residues; that stretch reads FHGESKENTARSEN. Residues Ser-389, Ser-396, and Ser-401 each carry the phosphoserine modification. The tract at residues 402–437 is interaction with SAV1 and STK3/MST2; it reads YLAKSKCRDLKKRLHAAQLRAQALADIEKNYQLKSR. Residues 403-427 are a coiled coil; it reads LAKSKCRDLKKRLHAAQLRAQALAD. Position 436 is a phosphoserine; by STK3/MST2 (Ser-436).

The protein belongs to the protein kinase superfamily. NEK Ser/Thr protein kinase family. NIMA subfamily. Forms homodimers and heterodimers. Interacts with CDC20, CTNB1, MAD1L1, MAD2L1, MAPK, NEK11, NPM1, NDC80, PCNT, PPP1CA, PPP1CC and SGO1. Interacts with STK3/MST2 (via SARAH domain) and SAV1 (via SARAH domain). Interacts with NECAB3 and HMGA2. Interacts with CEP68; the interaction leads to phosphorylation of CEP68. Interacts with CNTLN; the interaction leads to phosphorylation of CNTLN. Interacts with CEP85. Requires Mg(2+) as cofactor. In terms of processing, activated by autophosphorylation. Protein phosphatase 1 represses autophosphorylation and activation of isoform 1 by dephosphorylation. Phosphorylation by STK3/MST2 is necessary for its localization to the centrosome. As to expression, most abundantly expressed in testis. Low levels found in mid-gestation embryo, ovary, placenta, intestine, thymus and skin. Within the testis, expression restricted to germ cells with highest levels detected in spermatocytes at pachytene and diplotene stages. Also expressed in meiotic pachytene oocytes.

It is found in the nucleus. The protein resides in the nucleolus. The protein localises to the cytoplasm. It localises to the cytoskeleton. Its subcellular location is the microtubule organizing center. It is found in the centrosome. The protein resides in the spindle pole. The protein localises to the chromosome. It localises to the centromere. Its subcellular location is the kinetochore. It carries out the reaction L-seryl-[protein] + ATP = O-phospho-L-seryl-[protein] + ADP + H(+). The catalysed reaction is L-threonyl-[protein] + ATP = O-phospho-L-threonyl-[protein] + ADP + H(+). With respect to regulation, its catalytic activity is inhibited by the inhibitor CCT241950. In the presence of this inhibitor, displays an autoinhibited conformation: Tyr-70 side chain points into the active site, interacts with the activation loop, and blocks the alphaC helix. Protein kinase which is involved in the control of centrosome separation and bipolar spindle formation in mitotic cells and chromatin condensation in meiotic cells. Regulates centrosome separation (essential for the formation of bipolar spindles and high-fidelity chromosome separation) by phosphorylating centrosomal proteins such as CROCC, CEP250 and NINL, resulting in their displacement from the centrosomes. Regulates kinetochore microtubule attachment stability in mitosis via phosphorylation of NDC80. Involved in regulation of mitotic checkpoint protein complex via phosphorylation of CDC20 and MAD2L1. Plays an active role in chromatin condensation during the first meiotic division through phosphorylation of HMGA2. Phosphorylates: PPP1CC; SGO1; NECAB3 and NPM1. Essential for localization of MAD2L1 to kinetochore and MAPK1 and NPM1 to the centrosome. Phosphorylates CEP68 and CNTLN directly or indirectly. NEK2-mediated phosphorylation of CEP68 promotes CEP68 dissociation from the centrosome and its degradation at the onset of mitosis. Phosphorylates and activates NEK11 in G1/S-arrested cells. Involved in the regulation of centrosome disjunction. In Mus musculus (Mouse), this protein is Serine/threonine-protein kinase Nek2 (Nek2).